Here is a 348-residue protein sequence, read N- to C-terminus: Propane 2-monooxygenase, reductase component (348 aa).

The 2Fe-2S ferredoxin-type domain occupies 5–95 (HKINFEPVDI…DCTIELLNFD (91 aa)). [2Fe-2S] cluster is bound by residues Cys-39, Cys-44, Cys-47, and Cys-79. One can recognise an FAD-binding FR-type domain in the interval 105–206 (IQDVRTEVLA…TGPYGSFTLK (102 aa)).

Belongs to the bacterial ring-hydroxylating dioxygenase ferredoxin reductase family. In terms of assembly, the propane 2-monooxygenase multicomponent enzyme system is composed of an electron transfer component and a monooxygenase component interacting with the effector protein MimD. The electron transfer component is composed of a reductase (MimB), and the monooxygenase component is formed by a large subunit (MimA) and a small subunit (MimC). Requires FAD as cofactor. The cofactor is [2Fe-2S] cluster.

Reductase component of the propane 2-monooxygenase multicomponent enzyme system which is involved in the degradation of propane via the O2-dependent hydroxylation of propane. Reductase catalyzes the transfer of electrons from NADH or NADPH to monooxygenase. In Mycolicibacterium goodii (Mycobacterium goodii), this protein is Propane 2-monooxygenase, reductase component.